Reading from the N-terminus, the 113-residue chain is UPF0321 protein C569.02c (113 aa).

Positions Met1–Ala17 are cleaved as a signal peptide. Residues Asn20, Asn39, and Asn65 are each glycosylated (N-linked (GlcNAc...) asparagine).

It belongs to the UPF0321 family.

The sequence is that of UPF0321 protein C569.02c from Schizosaccharomyces pombe (strain 972 / ATCC 24843) (Fission yeast).